The chain runs to 257 residues: MNPLIIKLGGVLLDSEEALERLFSALVDYRESHQRPLVIVHGGGCVVDELMKGLNLPVKKKNGLRVTPADQIDIITGALAGTANKTLLSWAKKHHIASVGLYLGDGDSVKVTQLDEELGHVGLAQPGSPKLINTLLEGGFLPVVSSIGVTEEGQLMNVNADQAATALAATLGADLILLSDVSGILDGKGQRIAEMTAAKAEQLISQGIITDGMIVKVNAALDAARTLGRPVDIASWRHAEQLPALFNGTPIGTRILA.

Residues 43–44 (GG), Arg-65, and Asn-157 contribute to the substrate site. ATP contacts are provided by residues 180-185 (DVSGIL) and 208-210 (IIT).

The protein belongs to the acetylglutamate kinase family. ArgB subfamily. As to quaternary structure, homodimer.

It localises to the cytoplasm. The catalysed reaction is N-acetyl-L-glutamate + ATP = N-acetyl-L-glutamyl 5-phosphate + ADP. It participates in amino-acid biosynthesis; L-arginine biosynthesis; N(2)-acetyl-L-ornithine from L-glutamate: step 2/4. Functionally, catalyzes the ATP-dependent phosphorylation of N-acetyl-L-glutamate. In Enterobacter sp. (strain 638), this protein is Acetylglutamate kinase.